Consider the following 268-residue polypeptide: Putative carbamate hydrolase RutD (268 aa).

Positions 15–119 (PVMVMIAGLG…VIVNGWLSLS (105 aa)) constitute an AB hydrolase-1 domain.

It belongs to the AB hydrolase superfamily. Hydrolase RutD family.

It catalyses the reaction carbamate + 2 H(+) = NH4(+) + CO2. Involved in pyrimidine catabolism. May facilitate the hydrolysis of carbamate, a reaction that can also occur spontaneously. The protein is Putative carbamate hydrolase RutD of Cronobacter sakazakii (strain ATCC BAA-894) (Enterobacter sakazakii).